The primary structure comprises 199 residues: Ribonuclease HII (199 aa).

The RNase H type-2 domain maps to 13–199; it reads GLVAGVDEVG…FAPIAKILCG (187 aa). A divalent metal cation contacts are provided by D19, E20, and D110.

The protein belongs to the RNase HII family. It depends on Mn(2+) as a cofactor. Mg(2+) is required as a cofactor.

The protein resides in the cytoplasm. The enzyme catalyses Endonucleolytic cleavage to 5'-phosphomonoester.. Its function is as follows. Endonuclease that specifically degrades the RNA of RNA-DNA hybrids. This Jannaschia sp. (strain CCS1) protein is Ribonuclease HII.